An 864-amino-acid chain; its full sequence is Probable M1 family aminopeptidase 1 (864 aa).

Substrate is bound by residues Glu-149 and 289–293; that span reads GAMEN. His-325 is a binding site for Zn(2+). The active-site Proton acceptor is the Glu-326. Zn(2+)-binding residues include His-329 and Glu-348.

Belongs to the peptidase M1 family. It depends on Zn(2+) as a cofactor.

This chain is Probable M1 family aminopeptidase 1, found in Encephalitozoon cuniculi (strain GB-M1) (Microsporidian parasite).